The sequence spans 577 residues: MAGLTVRDPAVDRSLRSVFVGNIPYEATEEQLKDIFSEVGPVVSFRLVYDRETGKPKGYGFCEYQDQETALSAMRNLNGREFSGRALRVDNAASEKNKEELKSLGTGAPVIESPYGETISPEDAPESISKAVASLPPEQMFELMKQMKLCVQNSPQEARNMLLQNPQLAYALLQAQVVMRIVDPEIALKILHRQTNIPTLIAGNPQPVHGAGPGSGSNVSMNQQNPQAPQAQSLGGMHVNGAPPLMQASMQGGVPAPGQIPAAVTGPGPGSLAPGGGMQAQVGMPGSGPVSMERGQVPMQDPRAAMQRGSLPANVPTPRGLLGDAPNDPRGGTLLSVTGEVEPRGYLGPPHQGPPMHHVPGHESRGPPPHELRGGPLPEPRPLMAEPRGPMLDQRGPPLDGRGGRDPRGIDARGMEARAMEARGLDARGLEARAMEARAMEARAMEARAMEARAMEVRGMEARGMDTRGPVPGPRGPIPSGMQGPSPINMGAVVPQGSRQVPVMQGTGLQGASIQGGSQPGGFSPGQNQVTPQDHEKAALIMQVLQLTADQIAMLPPEQRQSILILKEQIQKSTGAP.

Position 14 is a phosphoserine (serine 14). An RRM domain is found at 16–94; sequence RSVFVGNIPY…RALRVDNAAS (79 aa). The tract at residues 108–248 is interactions with CSTF3 and SYMPK; the sequence is APVIESPYGE…VNGAPPLMQA (141 aa). Residue lysine 189 forms a Glycyl lysine isopeptide (Lys-Gly) (interchain with G-Cter in SUMO2) linkage. The segment at 207 to 230 is disordered; sequence PVHGAGPGSGSNVSMNQQNPQAPQ. Arginine 308 carries the omega-N-methylarginine modification. The disordered stretch occupies residues 319-409; that stretch reads RGLLGDAPND…DGRGGRDPRG (91 aa). Basic and acidic residues predominate over residues 360 to 373; it reads PGHESRGPPPHELR. A 1; approximate repeat occupies 410–414; sequence IDARG. The segment at 410–469 is 12 X 5 AA tandem repeats of M-E-A-R-[AG]; it reads IDARGMEARAMEARGLDARGLEARAMEARAMEARAMEARAMEARAMEVRGMEARGMDTRG. Tandem repeats lie at residues 415–419 and 420–424. Residues 425 to 429 form a 4; approximate repeat; it reads LDARG. A 5; approximate repeat occupies 430–434; the sequence is LEARA. Repeat copies occupy residues 435–439, 440–444, 445–449, and 450–454. One copy of the 10; approximate repeat lies at 455–459; that stretch reads MEVRG. The stretch at 460–464 is repeat 11; it reads MEARG. A 12; approximate repeat occupies 465-469; sequence MDTRG. 2 positions are modified to omega-N-methylarginine: arginine 468 and arginine 475. The tract at residues 509–532 is disordered; the sequence is LQGASIQGGSQPGGFSPGQNQVTP. Positions 514-577 are interaction with RPO2TC1; the sequence is IQGGSQPGGF…EQIQKSTGAP (64 aa). Serine 518 and serine 524 each carry phosphoserine.

The CSTF complex is composed of CSTF1 (50 kDa subunit), CSTF2 (64 kDa subunit) and CSTF3 (77 kDa subunit). CSTF2 directly interacts with CSTF3, SYMPK and RPO2TC1. Interacts with HSF1 in heat-stressed cells. Interacts with CPSF2, CPSF3 and FIP1L1. Interacts with DDX1.

It localises to the nucleus. In terms of biological role, one of the multiple factors required for polyadenylation and 3'-end cleavage of mammalian pre-mRNAs. This subunit is directly involved in the binding to pre-mRNAs. This Pongo abelii (Sumatran orangutan) protein is Cleavage stimulation factor subunit 2 (CSTF2).